A 79-amino-acid polypeptide reads, in one-letter code: MATKKEEVKFEDNLAELENIVRKLESGDVALEDAIAEFQKGMKISETLKKTLNEAEQTLVKIVGKDDNESEFSAEQKEY.

It belongs to the XseB family. In terms of assembly, heterooligomer composed of large and small subunits.

The protein localises to the cytoplasm. It catalyses the reaction Exonucleolytic cleavage in either 5'- to 3'- or 3'- to 5'-direction to yield nucleoside 5'-phosphates.. Its function is as follows. Bidirectionally degrades single-stranded DNA into large acid-insoluble oligonucleotides, which are then degraded further into small acid-soluble oligonucleotides. The chain is Exodeoxyribonuclease 7 small subunit from Lactococcus lactis subsp. cremoris (strain MG1363).